The chain runs to 414 residues: Alanine--glyoxylate aminotransferase (414 aa).

Residues 1–23 (MFRMLAKASVTLGSRAASWVRNM) constitute a mitochondrion transit peptide. K231 carries the N6-(pyridoxal phosphate)lysine modification. K247 is subject to N6-acetyllysine; alternate. N6-succinyllysine; alternate is present on K247. N6-acetyllysine is present on residues K256 and K334. R382 serves as a coordination point for substrate. A Microbody targeting signal motif is present at residues 412–414 (NKL).

It belongs to the class-V pyridoxal-phosphate-dependent aminotransferase family. As to quaternary structure, homodimer. Requires pyridoxal 5'-phosphate as cofactor.

It localises to the peroxisome. The protein localises to the mitochondrion matrix. It catalyses the reaction L-serine + pyruvate = 3-hydroxypyruvate + L-alanine. The enzyme catalyses glyoxylate + L-alanine = glycine + pyruvate. Its function is as follows. Catalyzes the transamination of glyoxylate to glycine and contributes to the glyoxylate detoxification. Catalyzes the transamination between L-serine and pyruvate and weakly contributes to gluconeogenesis from the L-serine metabolism. The protein is Alanine--glyoxylate aminotransferase of Rattus norvegicus (Rat).